A 154-amino-acid chain; its full sequence is MYKMQLLSCIALTLALVANGAPTSSSTENTKKQVQSLLQDLHLLLKEINNHENLKLFRMLAFKFYMPKKATELKHLQCLAEELKPLEDVLNVAQSKTQNSIDIKDLMDNINRIVLTLKGSETRFTCEYDDETVTAVEFLNKWITFCQSIYSTMT.

The signal sequence occupies residues 1–20 (MYKMQLLSCIALTLALVANG). The O-linked (GalNAc...) threonine glycan is linked to Thr23. The cysteines at positions 78 and 126 are disulfide-linked.

It belongs to the IL-2 family.

It localises to the secreted. Its function is as follows. Cytokine produced by activated CD4-positive helper T-cells and to a lesser extend activated CD8-positive T-cells and natural killer (NK) cells that plays pivotal roles in the immune response and tolerance. Binds to a receptor complex composed of either the high-affinity trimeric IL-2R (IL2RA/CD25, IL2RB/CD122 and IL2RG/CD132) or the low-affinity dimeric IL-2R (IL2RB and IL2RG). Interaction with the receptor leads to oligomerization and conformation changes in the IL-2R subunits resulting in downstream signaling starting with phosphorylation of JAK1 and JAK3. In turn, JAK1 and JAK3 phosphorylate the receptor to form a docking site leading to the phosphorylation of several substrates including STAT5. This process leads to activation of several pathways including STAT, phosphoinositide-3-kinase/PI3K and mitogen-activated protein kinase/MAPK pathways. Functions as a T-cell growth factor and can increase NK-cell cytolytic activity as well. Promotes strong proliferation of activated B-cells and subsequently immunoglobulin production. Plays a pivotal role in regulating the adaptive immune system by controlling the survival and proliferation of regulatory T-cells, which are required for the maintenance of immune tolerance. Moreover, participates in the differentiation and homeostasis of effector T-cell subsets, including Th1, Th2, Th17 as well as memory CD8-positive T-cells. The chain is Interleukin-2 (IL2) from Delphinapterus leucas (Beluga whale).